The following is a 211-amino-acid chain: Protein-L-isoaspartate O-methyltransferase (211 aa).

Residue Ser-60 is part of the active site.

It belongs to the methyltransferase superfamily. L-isoaspartyl/D-aspartyl protein methyltransferase family.

The protein localises to the cytoplasm. It carries out the reaction [protein]-L-isoaspartate + S-adenosyl-L-methionine = [protein]-L-isoaspartate alpha-methyl ester + S-adenosyl-L-homocysteine. In terms of biological role, catalyzes the methyl esterification of L-isoaspartyl residues in peptides and proteins that result from spontaneous decomposition of normal L-aspartyl and L-asparaginyl residues. It plays a role in the repair and/or degradation of damaged proteins. The polypeptide is Protein-L-isoaspartate O-methyltransferase (Pseudomonas fluorescens (strain Pf0-1)).